The chain runs to 544 residues: Membrane protein insertase YidC (544 aa).

5 helical membrane-spanning segments follow: residues 13-33 (LSLF…SNIL), 343-363 (WGLS…PLTF), 409-429 (LGGC…YSLV), 461-481 (LYFV…FTQL), and 506-526 (MPIM…IYWI).

This sequence belongs to the OXA1/ALB3/YidC family. Type 1 subfamily. As to quaternary structure, interacts with the Sec translocase complex via SecD. Specifically interacts with transmembrane segments of nascent integral membrane proteins during membrane integration.

It localises to the cell inner membrane. In terms of biological role, required for the insertion and/or proper folding and/or complex formation of integral membrane proteins into the membrane. Involved in integration of membrane proteins that insert both dependently and independently of the Sec translocase complex, as well as at least some lipoproteins. Aids folding of multispanning membrane proteins. The protein is Membrane protein insertase YidC of Borreliella burgdorferi (strain ATCC 35210 / DSM 4680 / CIP 102532 / B31) (Borrelia burgdorferi).